We begin with the raw amino-acid sequence, 433 residues long: Probable D-serine dehydratase (433 aa).

K110 bears the N6-(pyridoxal phosphate)lysine mark.

This sequence belongs to the serine/threonine dehydratase family. DsdA subfamily. Pyridoxal 5'-phosphate is required as a cofactor.

The catalysed reaction is D-serine = pyruvate + NH4(+). The polypeptide is Probable D-serine dehydratase (Oenococcus oeni (strain ATCC BAA-331 / PSU-1)).